The following is an 834-amino-acid chain: Meiotic sister-chromatid recombination protein 3 (834 aa).

4 disordered regions span residues 75–136 (PAAA…QPRT), 251–291 (EETE…TGSL), 343–378 (RKLA…KQPL), and 458–479 (VRRS…KKLT). The segment covering 343–368 (RKLAQPQQGQNQRRTVSFTQGSIDHM) has biased composition (polar residues).

The protein localises to the cell membrane. May be involved in the control of meiotic sister-chromatid recombination. In Candida glabrata (strain ATCC 2001 / BCRC 20586 / JCM 3761 / NBRC 0622 / NRRL Y-65 / CBS 138) (Yeast), this protein is Meiotic sister-chromatid recombination protein 3 (MSC3).